We begin with the raw amino-acid sequence, 208 residues long: Uracil phosphoribosyltransferase (208 aa).

5-phospho-alpha-D-ribose 1-diphosphate-binding positions include Arg-77, Arg-102, and 129–137 (DPMLATGNS). Uracil is bound by residues Ile-193 and 198 to 200 (GDA). Asp-199 contributes to the 5-phospho-alpha-D-ribose 1-diphosphate binding site.

The protein belongs to the UPRTase family. Requires Mg(2+) as cofactor.

The catalysed reaction is UMP + diphosphate = 5-phospho-alpha-D-ribose 1-diphosphate + uracil. It functions in the pathway pyrimidine metabolism; UMP biosynthesis via salvage pathway; UMP from uracil: step 1/1. With respect to regulation, allosterically activated by GTP. Catalyzes the conversion of uracil and 5-phospho-alpha-D-ribose 1-diphosphate (PRPP) to UMP and diphosphate. The chain is Uracil phosphoribosyltransferase from Mycoplasmopsis pulmonis (strain UAB CTIP) (Mycoplasma pulmonis).